A 427-amino-acid chain; its full sequence is Proline--tRNA ligase (427 aa).

This sequence belongs to the class-II aminoacyl-tRNA synthetase family. ProS type 2 subfamily. As to quaternary structure, homodimer.

It is found in the cytoplasm. The enzyme catalyses tRNA(Pro) + L-proline + ATP = L-prolyl-tRNA(Pro) + AMP + diphosphate. In terms of biological role, catalyzes the attachment of proline to tRNA(Pro) in a two-step reaction: proline is first activated by ATP to form Pro-AMP and then transferred to the acceptor end of tRNA(Pro). This Rickettsia akari (strain Hartford) protein is Proline--tRNA ligase.